The primary structure comprises 474 residues: Protein FAM161A (474 aa).

Disordered regions lie at residues 78 to 126, 185 to 210, and 308 to 364; these read SSSS…PGEI, QKRREKASDAQETREKMLKRNEDDAE, and REEL…DQGL. Residues 188–250 adopt a coiled-coil conformation; it reads REKASDAQET…KKTRERSKAA (63 aa). The tract at residues 274 to 454 is required for interaction with CFAP418; that stretch reads KLRELCRAKK…PTASSRGREQ (181 aa). Polar residues predominate over residues 325-335; the sequence is LQSSPWPSHST. Residues Lys-397 and Lys-413 each participate in a glycyl lysine isopeptide (Lys-Gly) (interchain with G-Cter in SUMO2) cross-link. The tract at residues 412-474 is disordered; the sequence is LKETRRPNPS…KELARIGGAR (63 aa). Basic residues predominate over residues 422–431; that stretch reads PRHKSPRRSA. Residues 450 to 468 show a composition bias toward basic and acidic residues; that stretch reads RGREQAIRRSEKARMKELA.

Belongs to the FAM161 family. Interacts (via central region) with CFAP418 (via N-terminus); the interaction is direct. Interacts (via C-terminus) with microtubules. Interacts with LCA5. Interacts with CEP290. Interacts with SDCCAG8. Interacts with FAM161B. Interacts with POC1B. Interacts with CEP78. Forms a microtubule-associated complex with POC5, CETN2 and POC1B. Interacts with CCDC15. Expressed in the retina and kidney.

It localises to the cytoplasm. It is found in the cytoskeleton. The protein resides in the cilium basal body. Its subcellular location is the cell projection. The protein localises to the cilium. It localises to the microtubule organizing center. It is found in the centrosome. The protein resides in the centriole. Its function is as follows. Involved in ciliogenesis. The polypeptide is Protein FAM161A (Rattus norvegicus (Rat)).